A 458-amino-acid polypeptide reads, in one-letter code: MKSNFSKFKDFIKYKKVAVVGIGVSNRPLIKFLVKLGAKVTAFDKKHREKLGSISLELEEIGVDLVLGENYLDKLDGYDVIFKTPSMRIDRPEFVKAKEAGAYITSEMEEFIKYCPAKVFGITGSDGKTTTTTLVYEMLKKEGYRTWVGGNIGTPLFANIEEMKEDHMVVLELSSFQLMTMDVSPEISLITNLSPNHLDVHKDFEEYVWAKKNIFKYQSSDNLLVLNKDDDLTNGMENEALGDVLKFSLVEKVYNGACLSNNKLTIQGKEICDSKDIKLKGRHNIANLLAAFCMVNKYVSIDSMKYVATNFSGVEHRCEFIREVNEVKYYNDSIASSPSRTLAGLNSFEKPVILIAGGYDKKIPFEPLAEGGYDKIKILILMGDTKNKIKSAFEKVISHKKCEMEIVIVNSMEEAVKVADNMAEKGDIITLSPACASFDMYPNFEIRGNEFKNIVNSL.

124–130 contacts ATP; the sequence is GSDGKTT.

It belongs to the MurCDEF family.

The protein resides in the cytoplasm. The enzyme catalyses UDP-N-acetyl-alpha-D-muramoyl-L-alanine + D-glutamate + ATP = UDP-N-acetyl-alpha-D-muramoyl-L-alanyl-D-glutamate + ADP + phosphate + H(+). It functions in the pathway cell wall biogenesis; peptidoglycan biosynthesis. Cell wall formation. Catalyzes the addition of glutamate to the nucleotide precursor UDP-N-acetylmuramoyl-L-alanine (UMA). In Clostridium botulinum (strain Loch Maree / Type A3), this protein is UDP-N-acetylmuramoylalanine--D-glutamate ligase.